We begin with the raw amino-acid sequence, 650 residues long: Probable E3 ubiquitin ligase complex SCF subunit scon-2 (650 aa).

One can recognise an F-box domain in the interval 124-170 (IDFISALPVELAQKVLCYLDTVSLTKAAQVSQRWRTLADSDAVWVRM). The disordered stretch occupies residues 200–244 (QRQLAKGGPQGRVTELADSHDSQDRSVNQHGKRPAAEAEEEDPIK). Residues 214–223 (ELADSHDSQD) are compositionally biased toward basic and acidic residues. 5 WD repeats span residues 292-320 (GHEN…KIWN), 332-360 (GHTA…KVWN), 372-400 (AHTD…KIFD), 411-441 (GHSD…KLWD), and 453-488 (GHVG…AMSV). Positions 482-525 (NQDAMSVSSGGSGSPSMSHAQIERAGSPGSHSSSHNLLPSSLPS) are disordered. 2 stretches are compositionally biased toward low complexity: residues 487 to 499 (SVSS…PSMS) and 507 to 525 (GSPG…SLPS). WD repeat units follow at residues 528-564 (EDVR…RLWD), 576-604 (GHLE…KTWE), and 616-644 (GHCG…RLHS).

This sequence belongs to the WD repeat MET30/SCONB/SCON-2 family. In terms of assembly, component of the SCF(scon-2) E3 ubiquitin ligase complex.

Its pathway is protein modification; protein ubiquitination. Component of the SCF(scon-2) E3 ubiquitin ligase complex involved in the regulation of sulfur metabolite repression, probably by mediating the inactivation or degradation of the metR transcription factor. This is Probable E3 ubiquitin ligase complex SCF subunit scon-2 (scon-2) from Neurospora crassa (strain ATCC 24698 / 74-OR23-1A / CBS 708.71 / DSM 1257 / FGSC 987).